Reading from the N-terminus, the 439-residue chain is Acyl transferase 4 (439 aa).

Active-site proton acceptor residues include H166 and D382.

This sequence belongs to the plant acyltransferase family.

Its function is as follows. Grass-specific monolignol p-coumaroyl transferase involved in the biosynthesis of acylated monolignols or monolignol conjugates that serve as monomer precursors of lignin. Can synthesize sinapyl p-coumarate, p-coumaryl p-coumarate, sinapyl caffeate and p-coumaryl caffeate in vitro. This Oryza sativa subsp. japonica (Rice) protein is Acyl transferase 4.